Here is a 654-residue protein sequence, read N- to C-terminus: Sphingosine kinase 2 (654 aa).

Residues 1 to 17 (MNGHLEAEEQQDQRPDQ) are compositionally biased toward basic and acidic residues. The tract at residues 1–28 (MNGHLEAEEQQDQRPDQELTGSWGHGPR) is disordered. The required for binding to sulfatide and phosphoinositides and for membrane localizatione stretch occupies residues 1–175 (MNGHLEAEEQ…LPGDGEITPD (175 aa)). The short motif at 122–130 (RGRRGARRR) is the Nuclear localization signal element. Residues 178–325 (PRPPRLLLLV…LDLLSVTLAS (148 aa)) form the DAGKc domain. Residues 188–190 (NPF) and 220–224 (TERQN) each bind ATP. 245–248 (SGDG) is a binding site for substrate. Catalysis depends on D247, which acts as the Proton donor/acceptor. Residues E252 and 277–279 (GSG) each bind ATP. Substrate is bound at residue D344. Residues R351 and R357 each coordinate ATP. S387 is modified (phosphoserine; by MAPK). 2 positions are modified to phosphoserine: S393 and S399. The segment at 400 to 509 (ELTLTPDPAP…PLPTPDARVG (110 aa)) is disordered. The Nuclear export signal motif lies at 416-425 (LHRSVSDLPL). Phosphoserine; by PKD is present on residues S419 and S421. Over residues 447–461 (NGGGPELAGDWGGAG) the composition is skewed to gly residues. Residues 462 to 482 (DAPLSPDPLLSSPPGSPKAAL) show a composition bias toward low complexity. The residue at position 477 (S477) is a Phosphoserine. At T614 the chain carries Phosphothreonine; by MAPK. 622 to 624 (DGE) contributes to the ATP binding site.

Interacts with histone H3. Interacts with HDAC1, HDAC2, MBD2 and SIN3A. Interacts with EEF1A1; the interaction enhances SPHK2 kinase activity. Interacts with PHB2. Requires Mg(2+) as cofactor. In terms of processing, phosphorylated by PKD on Ser-419 and Ser-421 upon PMA treatment. Phosphorylation induces export from the nucleus to the cytoplasm. Phosphorylated by MAPK1 and MAPK2 at Ser-387 and Thr-614, phosphorylation is induced by agonists such as EGF and PMA and increases kinase activity. Post-translationally, cleaved by CASP1 in apoptotic cells. The truncated form is released from cells. In terms of tissue distribution, mainly expressed in adult kidney, liver, and brain. Expressed in cerebral cortex and hippocampus (at protein level). Isoform 1 is the predominant form expressed in most tissues.

It is found in the cytoplasm. Its subcellular location is the nucleus. The protein localises to the endoplasmic reticulum. It localises to the mitochondrion inner membrane. The protein resides in the lysosome membrane. The catalysed reaction is a sphingoid base + ATP = a sphingoid 1-phosphate + ADP + H(+). The enzyme catalyses sphing-4-enine + ATP = sphing-4-enine 1-phosphate + ADP + H(+). It catalyses the reaction sphinganine + ATP = sphinganine 1-phosphate + ADP + H(+). It carries out the reaction (4R)-hydroxysphinganine + ATP = (4R)-hydroxysphinganine 1-phosphate + ADP + H(+). With respect to regulation, inhibited by sulfatide. Kinase activity is increased by phosphorylation by MAPK2 upon PMA or EGF treatments. Its function is as follows. Catalyzes the phosphorylation of sphingosine to form sphingosine-1-phosphate (SPP), a lipid mediator with both intra- and extracellular functions. Also acts on D-erythro-dihydrosphingosine, D-erythro-sphingosine and L-threo-dihydrosphingosine. Binds phosphoinositides. In contrast to prosurvival SPHK1, has a positive effect on intracellular ceramide levels, inhibits cells growth and enhances apoptosis. In mitochondria, is important for cytochrome-c oxidase assembly and mitochondrial respiration. The SPP produced in mitochondria binds PHB2 and modulates the regulation via PHB2 of complex IV assembly and respiration. In nucleus, plays a role in epigenetic regulation of gene expression. Interacts with HDAC1 and HDAC2 and, through SPP production, inhibits their enzymatic activity, preventing the removal of acetyl groups from lysine residues with histones. Up-regulates acetylation of histone H3-K9, histone H4-K5 and histone H2B-K12. In nucleus, may have an inhibitory effect on DNA synthesis and cell cycle. In mast cells, is the main regulator of SPP production which mediates calcium influx, NF-kappa-B activation, cytokine production, such as TNF and IL6, and degranulation of mast cells. In dopaminergic neurons, is involved in promoting mitochondrial functions regulating ATP and ROS levels. Also involved in the regulation of glucose and lipid metabolism. The polypeptide is Sphingosine kinase 2 (Homo sapiens (Human)).